The primary structure comprises 268 residues: MGQKINPHGFRLGITTDWKSRWYADKQYAEYVKEDVAIRKLLATGMERAGIAKVEIERTRDRVRVDIHTARPGIVIGRRGAEADRIRSELEKLTGKQVQLNILEVKNAEAEAQLVAQGVAEQLSNRVAFRRAMRKAIQSAMRQPNVKGIRVQCSGRLGGAEMSRSEFYREGRVPLHTLRADIDYGLYEAKTTFGRIGVKVWIYKGDIVGGKRELAANVAAPAGDRPRRERPSRPRRSGATGTTATSTEAGRAATATADAPATTEQKEG.

The KH type-2 domain occupies 38–106 (IRKLLATGME…QVQLNILEVK (69 aa)). The disordered stretch occupies residues 218-268 (VAAPAGDRPRRERPSRPRRSGATGTTATSTEAGRAATATADAPATTEQKEG). A compositionally biased stretch (low complexity) spans 237–268 (SGATGTTATSTEAGRAATATADAPATTEQKEG).

This sequence belongs to the universal ribosomal protein uS3 family. Part of the 30S ribosomal subunit. Forms a tight complex with proteins S10 and S14.

Functionally, binds the lower part of the 30S subunit head. Binds mRNA in the 70S ribosome, positioning it for translation. In Rhodococcus jostii (strain RHA1), this protein is Small ribosomal subunit protein uS3.